A 957-amino-acid polypeptide reads, in one-letter code: Glycine dehydrogenase (decarboxylating) (957 aa).

N6-(pyridoxal phosphate)lysine is present on Lys-708.

Belongs to the GcvP family. The glycine cleavage system is composed of four proteins: P, T, L and H. It depends on pyridoxal 5'-phosphate as a cofactor.

It carries out the reaction N(6)-[(R)-lipoyl]-L-lysyl-[glycine-cleavage complex H protein] + glycine + H(+) = N(6)-[(R)-S(8)-aminomethyldihydrolipoyl]-L-lysyl-[glycine-cleavage complex H protein] + CO2. In terms of biological role, the glycine cleavage system catalyzes the degradation of glycine. The P protein binds the alpha-amino group of glycine through its pyridoxal phosphate cofactor; CO(2) is released and the remaining methylamine moiety is then transferred to the lipoamide cofactor of the H protein. The polypeptide is Glycine dehydrogenase (decarboxylating) (Salmonella heidelberg (strain SL476)).